The chain runs to 231 residues: Ion-translocating oxidoreductase complex subunit E (231 aa).

A run of 6 helical transmembrane segments spans residues 18 to 38 (GLVQ…LTNA), 39 to 59 (LGLG…VSLV), 69 to 89 (IPVF…FINA), 93 to 113 (GLYL…VIIG), 127 to 147 (STFD…VLGA), and 182 to 202 (TFLL…LIAL).

It belongs to the NqrDE/RnfAE family. In terms of assembly, the complex is composed of six subunits: RnfA, RnfB, RnfC, RnfD, RnfE and RnfG.

Its subcellular location is the cell inner membrane. In terms of biological role, part of a membrane-bound complex that couples electron transfer with translocation of ions across the membrane. The polypeptide is Ion-translocating oxidoreductase complex subunit E (Shewanella piezotolerans (strain WP3 / JCM 13877)).